The sequence spans 185 residues: Large ribosomal subunit protein uL6m (185 aa).

It belongs to the universal ribosomal protein uL6 family.

It localises to the mitochondrion. In Reclinomonas americana, this protein is Large ribosomal subunit protein uL6m (RPL6).